The sequence spans 549 residues: Glucose-6-phosphate isomerase (549 aa).

The active-site Proton donor is the Glu-355. Catalysis depends on residues His-386 and Lys-514.

It belongs to the GPI family.

It localises to the cytoplasm. The enzyme catalyses alpha-D-glucose 6-phosphate = beta-D-fructose 6-phosphate. Its pathway is carbohydrate biosynthesis; gluconeogenesis. The protein operates within carbohydrate degradation; glycolysis; D-glyceraldehyde 3-phosphate and glycerone phosphate from D-glucose: step 2/4. Functionally, catalyzes the reversible isomerization of glucose-6-phosphate to fructose-6-phosphate. In Enterobacter sp. (strain 638), this protein is Glucose-6-phosphate isomerase.